The sequence spans 218 residues: 3-dehydroquinate dehydratase (218 aa).

3-dehydroquinate-binding positions include 29-31 (EFR) and Arg-56. Catalysis depends on His-116, which acts as the Proton donor/acceptor. Lys-142 functions as the Schiff-base intermediate with substrate in the catalytic mechanism. Residues Arg-180, Ser-200, and Gln-204 each contribute to the 3-dehydroquinate site.

The protein belongs to the type-I 3-dehydroquinase family. Homodimer.

The catalysed reaction is 3-dehydroquinate = 3-dehydroshikimate + H2O. The protein operates within metabolic intermediate biosynthesis; chorismate biosynthesis; chorismate from D-erythrose 4-phosphate and phosphoenolpyruvate: step 3/7. Functionally, involved in the third step of the chorismate pathway, which leads to the biosynthesis of aromatic amino acids. Catalyzes the cis-dehydration of 3-dehydroquinate (DHQ) and introduces the first double bond of the aromatic ring to yield 3-dehydroshikimate. The sequence is that of 3-dehydroquinate dehydratase from Methanococcus maripaludis (strain DSM 14266 / JCM 13030 / NBRC 101832 / S2 / LL).